A 257-amino-acid chain; its full sequence is Acetylglutamate kinase (257 aa).

Substrate is bound by residues 43-44, Arg65, and Asn157; that span reads GG. ATP contacts are provided by residues 180 to 185 and 208 to 210; these read DVSGIL and IIT.

Belongs to the acetylglutamate kinase family. ArgB subfamily. Homodimer.

It localises to the cytoplasm. The enzyme catalyses N-acetyl-L-glutamate + ATP = N-acetyl-L-glutamyl 5-phosphate + ADP. It functions in the pathway amino-acid biosynthesis; L-arginine biosynthesis; N(2)-acetyl-L-ornithine from L-glutamate: step 2/4. Functionally, catalyzes the ATP-dependent phosphorylation of N-acetyl-L-glutamate. The polypeptide is Acetylglutamate kinase (Salmonella paratyphi B (strain ATCC BAA-1250 / SPB7)).